The sequence spans 133 residues: Vascular endothelial growth factor homolog (133 aa).

An N-terminal signal peptide occupies residues 1-20; the sequence is MKLLVGILVAVCLHQYLLNA. Cystine bridges form between C36–C78, C67–C112, and C71–C114. Residue N85 is glycosylated (N-linked (GlcNAc...) asparagine; by host).

It belongs to the PDGF/VEGF growth factor family. Homodimer; disulfide-linked.

It localises to the secreted. In terms of biological role, induces endothelial proliferation. The chain is Vascular endothelial growth factor homolog from Orf virus (strain NZ2) (OV NZ-2).